The sequence spans 162 residues: Regulator of ribonuclease activity A (162 aa).

Belongs to the RraA family. Homotrimer. Binds to both RNA-binding sites in the C-terminal region of Rne and to RhlB.

It is found in the cytoplasm. Its function is as follows. Globally modulates RNA abundance by binding to RNase E (Rne) and regulating its endonucleolytic activity. Can modulate Rne action in a substrate-dependent manner by altering the composition of the degradosome. Modulates RNA-binding and helicase activities of the degradosome. The chain is Regulator of ribonuclease activity A from Haemophilus influenzae (strain ATCC 51907 / DSM 11121 / KW20 / Rd).